Reading from the N-terminus, the 144-residue chain is Large ribosomal subunit protein uL15 (144 aa).

Positions 1–44 are disordered; sequence MNLNELQPAAGSRHVRNRVGRGTSSGNGKTSGRGQKGQKARGKV. Residues 23–35 are compositionally biased toward gly residues; the sequence is TSSGNGKTSGRGQ.

This sequence belongs to the universal ribosomal protein uL15 family. Part of the 50S ribosomal subunit.

In terms of biological role, binds to the 23S rRNA. The protein is Large ribosomal subunit protein uL15 of Leuconostoc mesenteroides subsp. mesenteroides (strain ATCC 8293 / DSM 20343 / BCRC 11652 / CCM 1803 / JCM 6124 / NCDO 523 / NBRC 100496 / NCIMB 8023 / NCTC 12954 / NRRL B-1118 / 37Y).